The following is a 262-amino-acid chain: Type III pantothenate kinase (262 aa).

An ATP-binding site is contributed by 6–13; it reads DVGNTNAV. Residues Tyr-100 and 107 to 110 contribute to the substrate site; that span reads GADR. Asp-109 acts as the Proton acceptor in catalysis. Asp-129 is a K(+) binding site. Position 132 (Thr-132) interacts with ATP. Substrate is bound at residue Thr-184.

This sequence belongs to the type III pantothenate kinase family. In terms of assembly, homodimer. The cofactor is NH4(+). K(+) is required as a cofactor.

It is found in the cytoplasm. It catalyses the reaction (R)-pantothenate + ATP = (R)-4'-phosphopantothenate + ADP + H(+). It participates in cofactor biosynthesis; coenzyme A biosynthesis; CoA from (R)-pantothenate: step 1/5. Its function is as follows. Catalyzes the phosphorylation of pantothenate (Pan), the first step in CoA biosynthesis. In Bacillus anthracis (strain A0248), this protein is Type III pantothenate kinase.